A 655-amino-acid chain; its full sequence is p-hydroxybenzoic acid efflux pump subunit AaeB (655 aa).

11 consecutive transmembrane segments (helical) span residues 13–33 (FAVK…HFQL), 38–58 (WAVL…GGEP), 67–89 (GFLR…IAMI), 93–112 (LLMI…ISSL), 121–141 (WGLA…EPLL), 152–172 (EIVI…PRSI), 370–390 (LFWL…IAVV), 407–427 (FIYG…VIIP), 431–451 (QSML…GIEV), 459–479 (MGAL…TFHF), and 482–502 (FLDS…VILL).

It belongs to the aromatic acid exporter ArAE (TC 2.A.85) family.

Its subcellular location is the cell inner membrane. Its function is as follows. Forms an efflux pump with AaeA. Could function as a metabolic relief valve, allowing to eliminate certain compounds when they accumulate to high levels in the cell. This is p-hydroxybenzoic acid efflux pump subunit AaeB from Escherichia coli O9:H4 (strain HS).